The following is a 784-amino-acid chain: Alpha-catulin (784 aa).

The interval 35 to 247 is vinculin/alpha-catenin homology 1 (VH1) region; it reads IKTKSIEQTL…LLLTASKTYL (213 aa). A coiled-coil region spans residues 387 to 414; the sequence is ASGLEVTVERLNRRLKDLSKQLQIVAME. A vinculin/alpha-catenin homology 2 (VH2) region region spans residues 552–696; that stretch reads PRPGKHGTTQ…MVKSPTVGKT (145 aa). The disordered stretch occupies residues 737–784; the sequence is GSVNGRTGADGERTSRESTVWRRTPSIRRAAPPTSSHLSANNSSSIHI. Residues 745-756 show a composition bias toward basic and acidic residues; it reads ADGERTSRESTV. The segment covering 771 to 784 has biased composition (low complexity); it reads SSHLSANNSSSIHI.

Belongs to the vinculin/alpha-catenin family. As to quaternary structure, interacts with slo-1 (via C-terminus); the interaction is required for localization of slo-1 to dense bodies in body wall muscle cells. Interacts (via N-terminus) with dystrophin complex member dyb-1 (via C-terminus); the interaction is required for localization of the dystrophin complex and ctn-1 near dense bodies in muscle cells. Expressed in body wall muscles, vulval muscles, stomatointestinal cells and pharyngeal muscle cells. Expressed in enteric muscles, nerve ring neurons and in the ventral nerve cord.

Its subcellular location is the cytoplasm. Its function is as follows. Required for slo-1 potassium ion channel clustering at presynaptic terminals and in egg-laying muscles; clustering of slo-1 mediates the intoxicating and sedatory effects of ethanol on worms. Required for slo-1 localization to dense bodies in body wall muscle cells. Maintains the localization of the dystrophin complex near muscle cell dense bodies via its interaction with complex member dyb-1 which is required for slo-1 localization in muscle while slo-1 localization in neurons is independent of the dystrophin complex. The polypeptide is Alpha-catulin (Caenorhabditis elegans).